The sequence spans 450 residues: Probable ECA polymerase (450 aa).

A run of 11 helical transmembrane segments spans residues 6-26, 37-57, 63-83, 118-138, 155-175, 181-201, 207-227, 228-248, 341-361, 378-398, and 410-430; these read FSGL…LTWF, VFFS…TSVL, VGVA…CFYA, VILM…NGFL, GVAL…VYFL, AWLF…MIVG, IIIA…ISLW, MLAA…LKRY, LVVM…GLII, YKAA…IVLA, and VFFI…YWLF.

This sequence belongs to the WzyE family. Probably part of a complex composed of WzxE, WzyE and WzzE.

Its subcellular location is the cell inner membrane. Its pathway is bacterial outer membrane biogenesis; enterobacterial common antigen biosynthesis. Functionally, probably involved in the polymerization of enterobacterial common antigen (ECA) trisaccharide repeat units. This Shigella sonnei (strain Ss046) protein is Probable ECA polymerase.